The sequence spans 200 residues: Recombination protein RecR (200 aa).

The segment at 59-74 (CSVCGSLDTSDPCAIC) adopts a C4-type zinc-finger fold. Residues 82–177 (RLLCVVEEVG…SVTMLARGVP (96 aa)) enclose the Toprim domain.

The protein belongs to the RecR family.

Functionally, may play a role in DNA repair. It seems to be involved in an RecBC-independent recombinational process of DNA repair. It may act with RecF and RecO. The protein is Recombination protein RecR of Caulobacter sp. (strain K31).